Reading from the N-terminus, the 406-residue chain is Putative cyclin-F3-2 (406 aa).

The interval 1 to 107 (MARPRTRSVA…PGAAGGPWQL (107 aa)) is disordered. 2 stretches are compositionally biased toward low complexity: residues 11 to 21 (RMEATAAAAAA) and 29 to 57 (NPDG…NAGE).

The protein belongs to the cyclin family. Cyclin F subfamily.

In Oryza sativa subsp. japonica (Rice), this protein is Putative cyclin-F3-2 (CYCF3-2).